A 351-amino-acid chain; its full sequence is Pentatricopeptide repeat-containing protein At2g40240, mitochondrial (351 aa).

A mitochondrion-targeting transit peptide spans 1 to 27 (MSLLRRRFVKQSVNCITFLQILAERSF). PPR repeat units follow at residues 106 to 140 (RKNAYDILISRLCKLGRIDDALIVIGDMSNGRLGL), 141 to 175 (TPSTYHPILCSLTRKYKIEEAWRVVESMRSKSVSM), 176 to 210 (DVTAYNYFLTSHCYDGELESASEVMRKIEEDGNSP), 211 to 245 (DSRSYDALVLGACRAGKVEAAMAILRRMEEDGVTV), 246 to 280 (LYSTHAHVITGLVEGGYYALGLEFVMAYAGKDLRL), and 281 to 315 (DSESFGFLAGKLVKRKRYEEAMIVVKEMVMRGLRM).

Belongs to the PPR family. P subfamily.

Its subcellular location is the mitochondrion. This chain is Pentatricopeptide repeat-containing protein At2g40240, mitochondrial, found in Arabidopsis thaliana (Mouse-ear cress).